Here is a 124-residue protein sequence, read N- to C-terminus: Small ribosomal subunit protein uS12 (124 aa).

The residue at position 89 (Asp-89) is a 3-methylthioaspartic acid. A disordered region spans residues 104–124 (TQGVKNRGQARSRYGAKKEKK). Residues 111 to 124 (GQARSRYGAKKEKK) are compositionally biased toward basic residues.

It belongs to the universal ribosomal protein uS12 family. As to quaternary structure, part of the 30S ribosomal subunit. Contacts proteins S8 and S17. May interact with IF1 in the 30S initiation complex.

Its function is as follows. With S4 and S5 plays an important role in translational accuracy. Interacts with and stabilizes bases of the 16S rRNA that are involved in tRNA selection in the A site and with the mRNA backbone. Located at the interface of the 30S and 50S subunits, it traverses the body of the 30S subunit contacting proteins on the other side and probably holding the rRNA structure together. The combined cluster of proteins S8, S12 and S17 appears to hold together the shoulder and platform of the 30S subunit. The chain is Small ribosomal subunit protein uS12 from Micrococcus luteus (strain ATCC 4698 / DSM 20030 / JCM 1464 / CCM 169 / CCUG 5858 / IAM 1056 / NBRC 3333 / NCIMB 9278 / NCTC 2665 / VKM Ac-2230) (Micrococcus lysodeikticus).